The chain runs to 109 residues: Cell division suppressor protein YneA (109 aa).

Residues 39-90 (SEVNVNEGDSLWALADQYAGKSDMAKADFVSWVEKENNLSDGHVEAGDSVVI) form the LysM domain.

This sequence belongs to the YneA family.

It is found in the cytoplasm. Functionally, inhibits cell division during the SOS response. Affects a later stage of the cell division protein assembly, after the assembly of the Z ring, by probably suppressing recruitment of FtsL and/or DivIC to the division machinery. The chain is Cell division suppressor protein YneA from Listeria monocytogenes serovar 1/2a (strain ATCC BAA-679 / EGD-e).